Consider the following 98-residue polypeptide: Homeobox protein SMOX-4 (98 aa).

A DNA-binding region (homeobox) is located at residues 37-96 (SFRNRTAFTDYQLICLEREFSHIQYLSRIDRIHLAQNLNLTEKQVKIWFQNRRVRWRKRN).

The protein localises to the nucleus. The polypeptide is Homeobox protein SMOX-4 (SMOX-4) (Schistosoma mansoni (Blood fluke)).